The following is a 217-amino-acid chain: Small ribosomal subunit protein uS3c (217 aa).

The 71-residue stretch at 39 to 109 (IRSCIEKQLH…QIRINLIEIT (71 aa)) folds into the KH type-2 domain.

It belongs to the universal ribosomal protein uS3 family. Part of the 30S ribosomal subunit.

The protein resides in the plastid. The protein localises to the chloroplast. The sequence is that of Small ribosomal subunit protein uS3c (rps3) from Gracilaria tenuistipitata var. liui (Red alga).